The primary structure comprises 200 residues: LexA repressor (200 aa).

Positions 27–47 form a DNA-binding region, H-T-H motif; the sequence is VREICNAVELRSTSTVHGHLK. Residues Ser124 and Lys161 each act as for autocatalytic cleavage activity in the active site.

The protein belongs to the peptidase S24 family. As to quaternary structure, homodimer.

The catalysed reaction is Hydrolysis of Ala-|-Gly bond in repressor LexA.. Functionally, represses a number of genes involved in the response to DNA damage (SOS response), including recA and lexA. In the presence of single-stranded DNA, RecA interacts with LexA causing an autocatalytic cleavage which disrupts the DNA-binding part of LexA, leading to derepression of the SOS regulon and eventually DNA repair. This chain is LexA repressor, found in Clostridium tetani (strain Massachusetts / E88).